Consider the following 548-residue polypeptide: MTITLDGASLTLADIDAVARGGAKVAITGDADVLARVHGSRDVIARAVERGEEIYGVTTLFGGMADVHVTRDQLIDVQKIALWQHKSTTGPRLPDADVRAAMLLRANSLMRGASGVRIALIERLVAFLNAGASPQVYQRGSIGASGDLVPLTYIGASILGLSPEFLVDLDGETLDCHTVLAKLGFTPMDPDPKEGLALNNGTGACTGVAANVMARALDAATMALGVHALFAQALLATDQSFDPYIHAQKPHPGQVWSAARMAELLTGGRTIRSEAGGDRARRKGDLIQDRYGIRCLPQFFGPIVDGLSTAARQIETEANTANDNPLINPATGETFHTGNFLAQYTAIAMDSTRYLIGLMCKHIDSQIALMITPAFSNGLTPALVGNMDTGVNVGLKSLHIGMNQMSTQISYLGQSVADRFPTHAEMYNQNINSQAMNAANLARDQMDVTEHFLAAALLTGVQAVEVRSRVETGSCDARDILSPATVPLYEAARVAAAGRPDKARTIVWDDMDGFLQPKVEGLLADIGSRGNVHAALQALRSSLDTFRA.

Tyr55 functions as the Proton donor/acceptor in the catalytic mechanism. A cross-link (5-imidazolinone (Ala-Gly)) is located at residues 144–146 (ASG). Ser145 carries the 2,3-didehydroalanine (Ser) modification. (E)-cinnamate is bound by residues Asn200, Gln288, Arg294, Asn324, Lys396, Glu425, and Asn428.

This sequence belongs to the PAL/histidase family. In terms of assembly, homotetramer. Post-translationally, contains an active site 4-methylidene-imidazol-5-one (MIO), which is formed autocatalytically by cyclization and dehydration of residues Ala-Ser-Gly.

It catalyses the reaction L-phenylalanine = (E)-cinnamate + NH4(+). It carries out the reaction L-tyrosine = (E)-4-coumarate + NH4(+). The catalysed reaction is 3,4-dimethoxy-L-phenylalanine = 3,4-dimethoxy-(E)-cinnamate + NH4(+). The protein operates within phenylpropanoid metabolism; trans-cinnamate biosynthesis; trans-cinnamate from L-phenylalanine: step 1/1. Functionally, aromatic ammonia-lyase (AAL) that shows reduced activity to catalyze the non-oxidative ammonia elimination from the canonical AAL substrates L-Phe and L-Tyr, contrasted by its pronounced efficiency towards substrates with electron-donor aromatic substituents such as 3,4-dimethoxy-L-phenylalanine. Is also able to catalyze the reverse reaction in vitro, i.e. the ammonia addition reaction to cinnamate derivatives, producing enantiopure phenylalanine derivatives. Shows no activity with L-His. This chain is Aromatic ammonia-lyase, found in Loktanella atrilutea.